The chain runs to 364 residues: Probable secreted lipase phiG (364 aa).

A signal peptide spans 1-18; that stretch reads MMPFMDLILSILVSSVLL. N-linked (GlcNAc...) asparagine glycosylation is present at asparagine 49. Serine 203 acts as the Nucleophile in catalysis. A glycan (N-linked (GlcNAc...) asparagine) is linked at asparagine 262.

This sequence belongs to the AB hydrolase superfamily.

The protein resides in the secreted. The catalysed reaction is a carboxylic ester + H2O = an alcohol + a carboxylate + H(+). Part of the gene cluster that mediates the biosynthesis of the antihypercholesterolemic agents phomoidrides which are dimeric anhydrides. The function of phiG within the pathway has still to be determined. The pathway begins with the highly reducing polyketide synthase phiA that catalyzes the formation of a C12-fatty acyl-ACP, starting from one acetate and 5 malonate units. The hydrolase phiM is involved in the release of the C12-fatty acyl chain from phiA. The alkylcitrate synthase (ACS) phiJ and the alkylcitrate dehydratase (ACDH) phiI then give rise to decarboxylated monomeric anhydrides by coupling the C12-fatty acyl chain with oxalacetic acid. The cyclase phiC is responsible for the dimerization of the monomeric anhydrides which leads to the production of prephomoidride that contains the characteristic bicyclo[4.3.1]deca-1,6-diene system of phomoidrides. Iterative oxidation catalyzed by the alpha-ketoglutarate-dependent dioxygenase phiK produced then phomoidride A. Finally, the methyltransferase phiE converts phomoidride A to phomoidride B via an acetalization reaction. The phosphatidylethanolamine-binding protein phiB and phiN are not essential for dimerization and their functions have still to be determined. In Fungal sp. (strain ATCC 74256), this protein is Probable secreted lipase phiG.